The sequence spans 185 residues: Ribosome-recycling factor (185 aa).

This sequence belongs to the RRF family.

Its subcellular location is the cytoplasm. In terms of biological role, responsible for the release of ribosomes from messenger RNA at the termination of protein biosynthesis. May increase the efficiency of translation by recycling ribosomes from one round of translation to another. The polypeptide is Ribosome-recycling factor (Treponema denticola (strain ATCC 35405 / DSM 14222 / CIP 103919 / JCM 8153 / KCTC 15104)).